A 432-amino-acid polypeptide reads, in one-letter code: Glutamate-gated chloride channel subunit beta (432 aa).

Residues 1-18 (MSQYMMVAVAAVVAVAGS) form the signal peptide. The Extracellular segment spans residues 19 to 249 (SQISRRSTGG…MQLTLKRQFS (231 aa)). N52 is a glycosylation site (N-linked (GlcNAc...) asparagine). The L-glutamate site is built by R69, R88, and S155. A disulfide bond links C164 and C178. An L-glutamate-binding site is contributed by S184. N-linked (GlcNAc...) asparagine glycosylation occurs at N219. C226 and C237 are disulfide-bonded. A helical transmembrane segment spans residues 250–272 (YYLVQLYGPTTMIVIVSWVSFWI). Topologically, residues 273–277 (DMHST) are cytoplasmic. Residues 278-299 (AGRVALGVTTLLTMTTMQAAIN) traverse the membrane as a helical segment. The Extracellular portion of the chain corresponds to 300–306 (AKLPPVS). The helical transmembrane segment at 307–327 (YVKVVDVWLGACQTFVFGALL) threads the bilayer. At 328–402 (EYAFVSYQDS…KPDYLPAKID (75 aa)) the chain is on the cytoplasmic side. The chain crosses the membrane as a helical span at residues 403-426 (YYARFCVPLGFLAFNAIYWTSCLV). Over 427–432 (MVSRLV) the chain is Extracellular.

Belongs to the ligand-gated ion channel (TC 1.A.9) family. Glutamate-gated chloride channel (TC 1.A.9.4) subfamily. In terms of assembly, pentamer. Expressed in motor neuron commissures at the anterior portion of the worms.

The protein localises to the postsynaptic cell membrane. Its subcellular location is the cell membrane. Its function is as follows. Glutamate-gated chloride channel subunit; channel properties may be modulated by the formation of heteromeric channels. Glutamate binding triggers a rapidly reversible current, while the anti-helmintic drug ivermectin triggers a permanently open channel configuration. The chain is Glutamate-gated chloride channel subunit beta from Haemonchus contortus (Barber pole worm).